Reading from the N-terminus, the 563-residue chain is Septation ring formation regulator EzrA (563 aa).

Over 1–2 (ME) the chain is Extracellular. A helical membrane pass occupies residues 3-21 (LVIGLLVILLALFAAGYFF). The Cytoplasmic portion of the chain corresponds to 22 to 563 (RKKIYTEIDR…KKIKADQSAS (542 aa)). Coiled-coil stretches lie at residues 133–159 (EEKS…AYSH), 243–276 (KGYK…ELDV), and 309–529 (SKMP…ERLF).

This sequence belongs to the EzrA family.

The protein resides in the cell membrane. In terms of biological role, negative regulator of FtsZ ring formation; modulates the frequency and position of FtsZ ring formation. Inhibits FtsZ ring formation at polar sites. Interacts either with FtsZ or with one of its binding partners to promote depolymerization. The polypeptide is Septation ring formation regulator EzrA (Bacillus velezensis (strain DSM 23117 / BGSC 10A6 / LMG 26770 / FZB42) (Bacillus amyloliquefaciens subsp. plantarum)).